The primary structure comprises 380 residues: Glutamyl-tRNA reductase 1 (380 aa).

Substrate contacts are provided by residues 42 to 45 (TCNR), serine 93, 98 to 100 (ETD), and glutamine 104. Catalysis depends on cysteine 43, which acts as the Nucleophile. 172-177 (GAGAVG) is an NADP(+) binding site.

This sequence belongs to the glutamyl-tRNA reductase family. In terms of assembly, homodimer.

The enzyme catalyses (S)-4-amino-5-oxopentanoate + tRNA(Glu) + NADP(+) = L-glutamyl-tRNA(Glu) + NADPH + H(+). Its pathway is porphyrin-containing compound metabolism; protoporphyrin-IX biosynthesis; 5-aminolevulinate from L-glutamyl-tRNA(Glu): step 1/2. Catalyzes the NADPH-dependent reduction of glutamyl-tRNA(Glu) to glutamate 1-semialdehyde (GSA). This Pyrobaculum calidifontis (strain DSM 21063 / JCM 11548 / VA1) protein is Glutamyl-tRNA reductase 1.